The chain runs to 184 residues: Adenine phosphoribosyltransferase (184 aa).

It belongs to the purine/pyrimidine phosphoribosyltransferase family. Homodimer.

It is found in the cytoplasm. The catalysed reaction is AMP + diphosphate = 5-phospho-alpha-D-ribose 1-diphosphate + adenine. Its pathway is purine metabolism; AMP biosynthesis via salvage pathway; AMP from adenine: step 1/1. Catalyzes a salvage reaction resulting in the formation of AMP, that is energically less costly than de novo synthesis. In Shewanella baltica (strain OS223), this protein is Adenine phosphoribosyltransferase.